The chain runs to 397 residues: Lipoyl synthase 2, chloroplastic (397 aa).

Residues 1 to 35 constitute a chloroplast transit peptide; it reads MIEQSLSKPSFSLSIPIPKAPKSKSSFFCSYSKIR. Residues 49-85 form a disordered region; that stretch reads AKHPQNSTTINNGSSSSASVDLKNNEKGPYPYPGGGK. Positions 54–67 are enriched in low complexity; the sequence is NSTTINNGSSSSAS. The [4Fe-4S] cluster site is built by cysteine 128, cysteine 133, cysteine 139, cysteine 159, cysteine 163, cysteine 166, and serine 374. The region spanning 142–363 is the Radical SAM core domain; that stretch reads GGGDGIATAT…KEYGESIGFR (222 aa).

The protein belongs to the radical SAM superfamily. Lipoyl synthase family. Requires [4Fe-4S] cluster as cofactor.

Its subcellular location is the plastid. It localises to the chloroplast. The enzyme catalyses [[Fe-S] cluster scaffold protein carrying a second [4Fe-4S](2+) cluster] + N(6)-octanoyl-L-lysyl-[protein] + 2 oxidized [2Fe-2S]-[ferredoxin] + 2 S-adenosyl-L-methionine + 4 H(+) = [[Fe-S] cluster scaffold protein] + N(6)-[(R)-dihydrolipoyl]-L-lysyl-[protein] + 4 Fe(3+) + 2 hydrogen sulfide + 2 5'-deoxyadenosine + 2 L-methionine + 2 reduced [2Fe-2S]-[ferredoxin]. It participates in protein modification; protein lipoylation via endogenous pathway; protein N(6)-(lipoyl)lysine from octanoyl-[acyl-carrier-protein]: step 2/2. Functionally, catalyzes the radical-mediated insertion of two sulfur atoms into the C-6 and C-8 positions of the octanoyl moiety bound to the lipoyl domains of lipoate-dependent enzymes, thereby converting the octanoylated domains into lipoylated derivatives. The sequence is that of Lipoyl synthase 2, chloroplastic from Populus trichocarpa (Western balsam poplar).